The following is a 160-amino-acid chain: Endoplasmic reticulum transmembrane protein 2 (160 aa).

Over 1 to 2 the chain is Lumenal; sequence MG. The chain crosses the membrane as a helical span at residues 3–23; the sequence is VYLAVLFSLLVIEMAILFILV. Topologically, residues 24-45 are cytoplasmic; the sequence is LPLPQRMRRWLYIRYSIISTNK. A helical transmembrane segment spans residues 46-66; the sequence is KFRTYMVGIMIFVGLLFIDSW. Topologically, residues 67–103 are lumenal; that stretch reads KRSQIRVSTYRNQKNPYIINSVTPVDALASRAYNQRN. Residues 104-124 traverse the membrane as a helical segment; that stretch reads VYISGFIIYFYICILTVMSIL. Over 125–160 the chain is Cytoplasmic; that stretch reads RRIVEWNDKMKAGDDILKEKLRRKQKYLEELQKKKF. The Di-lysine motif motif lies at 157 to 160; it reads KKKF.

The protein belongs to the BCAP29/BCAP31 family.

It is found in the endoplasmic reticulum membrane. Its function is as follows. May play a role in anterograde transport of membrane proteins from the endoplasmic reticulum to the Golgi. The protein is Endoplasmic reticulum transmembrane protein 2 (YET2) of Saccharomyces cerevisiae (strain ATCC 204508 / S288c) (Baker's yeast).